The following is an 86-amino-acid chain: UPF0291 protein LBA1279 (86 aa).

2 stretches are compositionally biased toward basic and acidic residues: residues 1-27 (MNKD…KENE) and 65-75 (NGKEVTSEKAK). Disordered regions lie at residues 1–36 (MNKD…EEEE) and 65–86 (NGKE…LRKD). Basic residues predominate over residues 76-86 (QAQRKKGLRKD).

Belongs to the UPF0291 family.

The protein resides in the cytoplasm. The polypeptide is UPF0291 protein LBA1279 (Lactobacillus acidophilus (strain ATCC 700396 / NCK56 / N2 / NCFM)).